A 417-amino-acid chain; its full sequence is Exodeoxyribonuclease 7 large subunit (417 aa).

It belongs to the XseA family. As to quaternary structure, heterooligomer composed of large and small subunits.

It localises to the cytoplasm. It carries out the reaction Exonucleolytic cleavage in either 5'- to 3'- or 3'- to 5'-direction to yield nucleoside 5'-phosphates.. In terms of biological role, bidirectionally degrades single-stranded DNA into large acid-insoluble oligonucleotides, which are then degraded further into small acid-soluble oligonucleotides. The polypeptide is Exodeoxyribonuclease 7 large subunit (Lactococcus lactis subsp. cremoris (strain MG1363)).